The sequence spans 410 residues: MLMPLCGLLWWWWCCCSGWYCYGLCAPAPQMLRHQGLLKCRCRMLFNDLKVFLLRRPPQAPLPMHGDPQPPGLAANNTLPALGAGGWAGWRGPREVVGREPPPVPPPPPLPPSSVEDDWGGPATEPPASLLSSASSDDFCKEKTEDRYSLGSSLDSGMRTPLCRICFQGPEQGELLSPCRCDGSVKCTHQPCLIKWISERGCWSCELCYYKYHVIAISTKNPLQWQAISLTVIEKVQVAAAILGSLFLIASISWLIWSTFSPSARWQRQDLLFQICYGMYGFMDVVCIGLIIHEGPSVYRIFKRWQAVNQQWKVLNYDKTKDLEDQKAGGRTNPRTSSSTQANIPSSEEETAGTPAPEQGPAQAAGHPSGPLSHHHCAYTILHILSHLRPHEQRSPPGSSRELVMRVTTV.

The N-terminal stretch at 1 to 18 (MLMPLCGLLWWWWCCCSG) is a signal peptide. The segment at 92–136 (GPREVVGREPPPVPPPPPLPPSSVEDDWGGPATEPPASLLSSASS) is disordered. Residues 100–112 (EPPPVPPPPPLPP) show a composition bias toward pro residues. Over residues 126 to 136 (PPASLLSSASS) the composition is skewed to low complexity. The RING-CH-type zinc-finger motif lies at 155-215 (DSGMRTPLCR…ELCYYKYHVI (61 aa)). Positions 163, 166, 179, 181, 189, 192, 205, and 208 each coordinate Zn(2+). Transmembrane regions (helical) follow at residues 238-258 (VAAA…LIWS) and 272-292 (LFQI…GLII). Disordered regions lie at residues 324–372 (EDQK…SGPL) and 390–410 (PHEQ…VTTV). Positions 333 to 346 (NPRTSSSTQANIPS) are enriched in polar residues. The span at 352-366 (AGTPAPEQGPAQAAG) shows a compositional bias: low complexity.

In terms of tissue distribution, expressed in brain and placenta.

The protein resides in the golgi apparatus membrane. It carries out the reaction S-ubiquitinyl-[E2 ubiquitin-conjugating enzyme]-L-cysteine + [acceptor protein]-L-lysine = [E2 ubiquitin-conjugating enzyme]-L-cysteine + N(6)-ubiquitinyl-[acceptor protein]-L-lysine.. It participates in protein modification; protein ubiquitination. Its function is as follows. E3 ubiquitin-protein ligase that may mediate ubiquitination of MHC-I and CD4, and promote their subsequent endocytosis and sorting to lysosomes via multivesicular bodies. E3 ubiquitin ligases accept ubiquitin from an E2 ubiquitin-conjugating enzyme in the form of a thioester and then directly transfer the ubiquitin to targeted substrates. This is E3 ubiquitin-protein ligase MARCHF4 from Homo sapiens (Human).